The chain runs to 647 residues: Protein FAM161A (647 aa).

Disordered regions lie at residues 32 to 55 (RELG…TSME) and 143 to 175 (PAQH…GDSE). A compositionally biased stretch (polar residues) spans 152-161 (SRSVSPSLAE). 2 coiled-coil regions span residues 243-268 (IKSK…ECQK) and 518-544 (AIRK…VLNK). Disordered stretches follow at residues 504–524 (QTPR…KREK) and 588–647 (DEHV…IEEI). Basic and acidic residues-rich tracts occupy residues 510-524 (ESSK…KREK) and 588-600 (DEHV…KKIP). The segment covering 613-638 (DLLDDEEDDKYDCESEEAEEEDAYST) has biased composition (acidic residues).

This sequence belongs to the FAM161 family.

It is found in the cytoplasm. The protein localises to the cytoskeleton. Its subcellular location is the cilium basal body. The protein resides in the cell projection. It localises to the cilium. It is found in the microtubule organizing center. The protein localises to the centrosome. Its subcellular location is the centriole. In terms of biological role, involved in ciliogenesis. This Xenopus laevis (African clawed frog) protein is Protein FAM161A (fam161a).